We begin with the raw amino-acid sequence, 255 residues long: 3-deoxy-manno-octulosonate cytidylyltransferase (255 aa).

Belongs to the KdsB family.

The protein localises to the cytoplasm. It carries out the reaction 3-deoxy-alpha-D-manno-oct-2-ulosonate + CTP = CMP-3-deoxy-beta-D-manno-octulosonate + diphosphate. It functions in the pathway nucleotide-sugar biosynthesis; CMP-3-deoxy-D-manno-octulosonate biosynthesis; CMP-3-deoxy-D-manno-octulosonate from 3-deoxy-D-manno-octulosonate and CTP: step 1/1. The protein operates within bacterial outer membrane biogenesis; lipopolysaccharide biosynthesis. Functionally, activates KDO (a required 8-carbon sugar) for incorporation into bacterial lipopolysaccharide in Gram-negative bacteria. In Xanthobacter autotrophicus (strain ATCC BAA-1158 / Py2), this protein is 3-deoxy-manno-octulosonate cytidylyltransferase.